The following is a 156-amino-acid chain: Ribonuclease P protein component (156 aa).

Residues 126–156 form a disordered region; that stretch reads GLRKLGVTPGGGRSPAPRAHSGARPRTDARS.

Belongs to the RnpA family. As to quaternary structure, consists of a catalytic RNA component (M1 or rnpB) and a protein subunit.

It catalyses the reaction Endonucleolytic cleavage of RNA, removing 5'-extranucleotides from tRNA precursor.. RNaseP catalyzes the removal of the 5'-leader sequence from pre-tRNA to produce the mature 5'-terminus. It can also cleave other RNA substrates such as 4.5S RNA. The protein component plays an auxiliary but essential role in vivo by binding to the 5'-leader sequence and broadening the substrate specificity of the ribozyme. This Nocardia farcinica (strain IFM 10152) protein is Ribonuclease P protein component.